A 323-amino-acid polypeptide reads, in one-letter code: Viral cathepsin (323 aa).

An N-terminal signal peptide occupies residues 1–16 (MNKILFYLFVYAVVKS). Residues 17–112 (AAYDPLKAPN…ILLDQPPGKG (96 aa)) constitute a propeptide, activation peptide. Intrachain disulfides connect Cys133-Cys174, Cys167-Cys207, and Cys262-Cys310. Residue Cys136 is part of the active site. The N-linked (GlcNAc...) asparagine; by host glycan is linked to Asn158. Active-site residues include His269 and Asn289.

This sequence belongs to the peptidase C1 family. Synthesized as an inactive proenzyme and activated by proteolytic removal of the inhibitory propeptide.

It catalyses the reaction Endopeptidase of broad specificity, hydrolyzing substrates of both cathepsin L and cathepsin B.. In terms of biological role, cysteine protease that plays an essential role in host liquefaction to facilitate horizontal transmission of the virus. May participate in the degradation of foreign protein expressed by the baculovirus system. In Bombyx mori (Silk moth), this protein is Viral cathepsin (VCATH).